Reading from the N-terminus, the 133-residue chain is Phosphoribosyl-ATP pyrophosphatase (133 aa).

The interval 1-22 is disordered; sequence MGKPATKPAPKPSKQQDDKKSD.

It belongs to the PRA-PH family.

The protein localises to the cytoplasm. The catalysed reaction is 1-(5-phospho-beta-D-ribosyl)-ATP + H2O = 1-(5-phospho-beta-D-ribosyl)-5'-AMP + diphosphate + H(+). Its pathway is amino-acid biosynthesis; L-histidine biosynthesis; L-histidine from 5-phospho-alpha-D-ribose 1-diphosphate: step 2/9. The chain is Phosphoribosyl-ATP pyrophosphatase from Gluconobacter oxydans (strain 621H) (Gluconobacter suboxydans).